The sequence spans 244 residues: MNHDYRTIDLFGLTFNLTNILMITVASVIVLLIAILTTRTLSIRPGKAQNFMEWIVDFVRNIIGSTMDLKTGANFLALGVTLLMYIFVSNMLGLPFSVTVGHELWWKSPTADPAITLTLAVMVVSLTHYYGVKMKGLKEYSKDYLRPVPLMFPMKIIEEFANTLTLGLRLYGNIFAGEILLGLLANLATNFYSNSFFLGLVGTVGAIIPMLAWQAFSLFIGTIQAFIFTMLTMVYMSHKISHDH.

6 consecutive transmembrane segments (helical) span residues 17–37 (LTNI…AILT), 75–95 (FLAL…LGLP), 112–132 (DPAI…YYGV), 164–184 (LTLG…LGLL), 196–216 (FFLG…WQAF), and 217–237 (SLFI…VYMS).

It belongs to the ATPase A chain family. F-type ATPases have 2 components, CF(1) - the catalytic core - and CF(0) - the membrane proton channel. CF(1) has five subunits: alpha(3), beta(3), gamma(1), delta(1), epsilon(1). CF(0) has three main subunits: a(1), b(2) and c(9-12). The alpha and beta chains form an alternating ring which encloses part of the gamma chain. CF(1) is attached to CF(0) by a central stalk formed by the gamma and epsilon chains, while a peripheral stalk is formed by the delta and b chains.

The protein resides in the cell membrane. In terms of biological role, key component of the proton channel; it plays a direct role in the translocation of protons across the membrane. The polypeptide is ATP synthase subunit a (Bacillus velezensis (strain DSM 23117 / BGSC 10A6 / LMG 26770 / FZB42) (Bacillus amyloliquefaciens subsp. plantarum)).